The chain runs to 108 residues: Small ribosomal subunit protein uS17 (108 aa).

Belongs to the universal ribosomal protein uS17 family. In terms of assembly, part of the 30S ribosomal subunit.

Functionally, one of the primary rRNA binding proteins, it binds specifically to the 5'-end of 16S ribosomal RNA. The chain is Small ribosomal subunit protein uS17 from Methanoregula boonei (strain DSM 21154 / JCM 14090 / 6A8).